The primary structure comprises 588 residues: L-fucose isomerase (588 aa).

Residues Glu-335 and Asp-359 each act as proton acceptor in the active site. Glu-335, Asp-359, and His-525 together coordinate Mn(2+).

It belongs to the L-fucose isomerase family. Mn(2+) serves as cofactor.

The protein resides in the cytoplasm. The catalysed reaction is L-fucose = L-fuculose. It functions in the pathway carbohydrate degradation; L-fucose degradation; L-lactaldehyde and glycerone phosphate from L-fucose: step 1/3. In terms of biological role, converts the aldose L-fucose into the corresponding ketose L-fuculose. The polypeptide is L-fucose isomerase (Streptococcus pneumoniae (strain JJA)).